A 166-amino-acid polypeptide reads, in one-letter code: Endoribonuclease YbeY (166 aa).

The Zn(2+) site is built by histidine 132, histidine 136, and histidine 142.

This sequence belongs to the endoribonuclease YbeY family. Requires Zn(2+) as cofactor.

It localises to the cytoplasm. In terms of biological role, single strand-specific metallo-endoribonuclease involved in late-stage 70S ribosome quality control and in maturation of the 3' terminus of the 16S rRNA. In Clostridium botulinum (strain Langeland / NCTC 10281 / Type F), this protein is Endoribonuclease YbeY.